Here is a 177-residue protein sequence, read N- to C-terminus: Inner membrane-spanning protein YciB (177 aa).

The next 5 helical transmembrane spans lie at 22–42 (IFIA…IHWI), 50–70 (ISLF…FFHN), 76–96 (WKIT…QFFT), 121–141 (FIWS…AYYF), and 149–169 (FKVF…SIYI).

The protein belongs to the YciB family.

Its subcellular location is the cell inner membrane. Plays a role in cell envelope biogenesis, maintenance of cell envelope integrity and membrane homeostasis. The chain is Inner membrane-spanning protein YciB from Buchnera aphidicola subsp. Acyrthosiphon pisum (strain 5A).